Reading from the N-terminus, the 306-residue chain is WUSCHEL-related homeobox 13 (306 aa).

Positions 1–11 (MMALGVPPPPS) are enriched in pro residues. Disordered regions lie at residues 1–20 (MMAL…GPLR), 103–142 (PRSH…PRPE), and 190–276 (SRSK…ARAT). Over residues 126 to 142 (GEERVPDPKPRRNPRPE) the composition is skewed to basic and acidic residues. The homeobox; WUS-type DNA-binding region spans 132–196 (DPKPRRNPRP…NRKSRSKNKL (65 aa)). Over residues 199 to 210 (GGTGRAGLGLGG) the composition is skewed to gly residues. Pro residues predominate over residues 231 to 242 (FTPPPILPPQPV). The span at 243–270 (QPQQQLVSPVAAPTSLSSSSSDRSSGSS) shows a compositional bias: low complexity.

This sequence belongs to the WUS homeobox family.

It localises to the nucleus. In terms of biological role, transcription factor which may be involved in developmental processes. This is WUSCHEL-related homeobox 13 (WOX13) from Oryza sativa subsp. japonica (Rice).